The primary structure comprises 157 residues: Endoribonuclease YbeY (157 aa).

Residues His114, His118, and His124 each coordinate Zn(2+).

The protein belongs to the endoribonuclease YbeY family. Zn(2+) serves as cofactor.

The protein localises to the cytoplasm. Its function is as follows. Single strand-specific metallo-endoribonuclease involved in late-stage 70S ribosome quality control and in maturation of the 3' terminus of the 16S rRNA. The sequence is that of Endoribonuclease YbeY from Klebsiella pneumoniae (strain 342).